The chain runs to 598 residues: Proline--tRNA ligase (598 aa).

It belongs to the class-II aminoacyl-tRNA synthetase family. ProS type 1 subfamily. Homodimer.

The protein resides in the cytoplasm. It catalyses the reaction tRNA(Pro) + L-proline + ATP = L-prolyl-tRNA(Pro) + AMP + diphosphate. Catalyzes the attachment of proline to tRNA(Pro) in a two-step reaction: proline is first activated by ATP to form Pro-AMP and then transferred to the acceptor end of tRNA(Pro). As ProRS can inadvertently accommodate and process non-cognate amino acids such as alanine and cysteine, to avoid such errors it has two additional distinct editing activities against alanine. One activity is designated as 'pretransfer' editing and involves the tRNA(Pro)-independent hydrolysis of activated Ala-AMP. The other activity is designated 'posttransfer' editing and involves deacylation of mischarged Ala-tRNA(Pro). The misacylated Cys-tRNA(Pro) is not edited by ProRS. This Synechococcus sp. (strain CC9311) protein is Proline--tRNA ligase.